The chain runs to 62 residues: uncharacterized protein (62 aa).

Positions 1 to 26 (MGELAASANHGHSPCYPERKGTPGDL) are disordered. Positions 17–26 (PERKGTPGDL) are enriched in basic and acidic residues.

This is an uncharacterized protein from Homo sapiens (Human).